The primary structure comprises 629 residues: Microtubule-associated protein 70-3 (629 aa).

A disordered region spans residues 1 to 54 (MEEGGYAFEVNNGRPTASEFGTTARISSPSLTMSSSFREGGGGGGSKGLTRRRS). Positions 13–33 (GRPTASEFGTTARISSPSLTM) are enriched in polar residues. A coiled-coil region spans residues 75–375 (VKVELNRLEN…ADRAAKSEAQ (301 aa)). Residues 257–493 (ILDKLHRQKV…FPLNQSSEGT (237 aa)) are required for targeting to microtubules. Disordered stretches follow at residues 391–421 (LRGP…LGGA), 458–519 (GTSR…DSVP), and 578–629 (AMEK…RSTQ). Residues 393–416 (GPSSSGNRSTPEGRSMSNGPSRRQ) are compositionally biased toward polar residues. Residues 544–592 (LRDKDEAIEMLAKKVETLTKAMEVEAKKMRREVAAMEKEVSAMRVDNKG) are a coiled coil. Positions 578 to 596 (AMEKEVSAMRVDNKGSDSR) are enriched in basic and acidic residues. Residues 603–613 (NSKGASTTAQL) are compositionally biased toward polar residues.

It belongs to the MAP70 family.

Its subcellular location is the cytoplasm. The protein resides in the cytoskeleton. In terms of biological role, plant-specific protein that interact with microtubules. This Arabidopsis thaliana (Mouse-ear cress) protein is Microtubule-associated protein 70-3 (MAP70.3).